The following is a 912-amino-acid chain: DNA (cytosine-5)-methyltransferase 3A (912 aa).

Disordered stretches follow at residues Met1–Ser178 and Ile221–Asp286. Residues Ala17–Glu40 are compositionally biased toward basic and acidic residues. The segment covering Lys47–His57 has biased composition (basic residues). Over residues Lys74–Gly83 the composition is skewed to polar residues. Phosphoserine is present on Ser105. Positions Gly113–Ala128 are enriched in low complexity. Phosphothreonine is present on Thr124. Residues Ala149 to Arg167 are compositionally biased toward basic and acidic residues. Lys162 is covalently cross-linked (Glycyl lysine isopeptide (Lys-Gly) (interchain with G-Cter in SUMO2)). Arg171 carries the omega-N-methylarginine modification. The interval Ser199–Asn403 is interaction with DNMT1 and DNMT3B. A phosphoserine mark is found at Ser243 and Ser255. The segment covering Ala246–Thr260 has biased composition (polar residues). The residue at position 261 (Thr261) is a Phosphothreonine. Ser267 carries the phosphoserine modification. Positions Ala269–Asp279 are enriched in basic and acidic residues. The 59-residue stretch at Ile292–Phe350 folds into the PWWP domain. Phosphoserine is present on residues Ser390 and Ser393. Residues Ala447 to Lys466 form a disordered region. In terms of domain architecture, ADD spans Glu482–Asp614. The segment at Ile493–Glu523 adopts a GATA-type; atypical zinc-finger fold. Positions Cys494–Cys586 are interaction with the PRC2/EED-EZH2 complex. The PHD-type; atypical zinc-finger motif lies at Gln534 to Gly590. The 279-residue stretch at Ile634–Val912 folds into the SAM-dependent MTase C5-type domain. S-adenosyl-L-methionine contacts are provided by residues Asp641–Thr645, Glu664, and Asp686–Arg688. The active site involves Cys710. An S-methylcysteine; by autocatalysis modification is found at Cys710. Arg891–Trp893 contacts S-adenosyl-L-methionine.

Belongs to the class I-like SAM-binding methyltransferase superfamily. C5-methyltransferase family. In terms of assembly, heterotetramer composed of 1 DNMT3A homodimer and 2 DNMT3L subunits (DNMT3L-DNMT3A-DNMT3A-DNMT3L). Interacts with UBC9, PIAS1 and PIAS2. Binds the ZBTB18 transcriptional repressor. Interacts with SETDB1. Associates with HDAC1 through its ADD domain. Interacts with UHRF1. Interacts with DNMT1 and DNMT3B. Interacts with the PRC2/EED-EZH2 complex. Interacts with MPHOSPH8. Interacts with histone H3 that is not methylated at 'Lys-4' (H3K4). Interacts with SPOCD1. Interacts with ZNF263; recruited to the SIX3 promoter along with other proteins involved in chromatin modification and transcriptional corepression where it contributes to transcriptional repression. Post-translationally, sumoylated; sumoylation disrupts the ability to interact with histone deacetylases (HDAC1 and HDAC2) and repress transcription. Auto-methylated at Cys-710: auto-methylation takes place in absence of DNA substrate and inactivates the DNA methyltransferase activity. Inactivation by auto-methylation may be used to inactivate unused DNA methyltransferases in the cell. Highly expressed in fetal tissues, skeletal muscle, heart, peripheral blood mononuclear cells, kidney, and at lower levels in placenta, brain, liver, colon, spleen, small intestine and lung.

It localises to the nucleus. It is found in the chromosome. The protein localises to the cytoplasm. The enzyme catalyses a 2'-deoxycytidine in DNA + S-adenosyl-L-methionine = a 5-methyl-2'-deoxycytidine in DNA + S-adenosyl-L-homocysteine + H(+). It carries out the reaction L-cysteinyl-[protein] + S-adenosyl-L-methionine = S-methyl-L-cysteinyl-[protein] + S-adenosyl-L-homocysteine + H(+). Its activity is regulated as follows. Activated by binding to the regulatory factor DNMT3L. Auto-methylation at Cys-710 in absence of DNA inactivates the DNA methyltransferase activity. In terms of biological role, required for genome-wide de novo methylation and is essential for the establishment of DNA methylation patterns during development. DNA methylation is coordinated with methylation of histones. It modifies DNA in a non-processive manner and also methylates non-CpG sites. May preferentially methylate DNA linker between 2 nucleosomal cores and is inhibited by histone H1. Plays a role in paternal and maternal imprinting. Required for methylation of most imprinted loci in germ cells. Acts as a transcriptional corepressor for ZBTB18. Recruited to trimethylated 'Lys-36' of histone H3 (H3K36me3) sites. Can actively repress transcription through the recruitment of HDAC activity. Also has weak auto-methylation activity on Cys-710 in absence of DNA. This Homo sapiens (Human) protein is DNA (cytosine-5)-methyltransferase 3A (DNMT3A).